A 979-amino-acid polypeptide reads, in one-letter code: Pimaradiene synthase pbcA (979 aa).

A VYDTAW motif motif is present at residues 34–39; it reads VYDTAW. The DXDD B-type cyclization motif signature appears at 328-331; it reads DADD. Positions 665, 669, 865, 866, 869, and 873 each coordinate Mg(2+). Residues 665-669 carry the DEXXE A-type cyclization motif motif; that stretch reads DEFME.

The protein belongs to the terpene synthase family. It depends on Mg(2+) as a cofactor.

The enzyme catalyses (2E,6E,10E)-geranylgeranyl diphosphate = ent-copalyl diphosphate. It catalyses the reaction ent-copalyl diphosphate = ent-pimara-8(14),15-diene + diphosphate. It participates in secondary metabolite biosynthesis; terpenoid biosynthesis. In terms of biological role, bifunctional terpene synthase; part of the gene cluster that mediates the biosynthesis of the diterpene ent-pimara-8(14),15-diene (PD). Within the cluster, the HMG-CoA reductase AN1593 functions in the mevalonate pathway, which produces isoprenoid precursors. The geranylgeranyl pyrophosphate (GGPP) synthase AN1592 is needed in the formation of GGPP, the precursor for diterpenes. Lastly, the pimaradiene synthase pbcA performs the 2 cyclization steps that convert GGPP to ent-pimara-8(14),15-diene with ent-copalyl diphosphate as an intermediate. The putative roles of the remaining cluster enzymes in ent-pimara-8(14),15-diene biosynthesis is unclear. The cytochrome P450 monooxygenase AN1598, the glutathione S-transferase AN1595, the oxidoreductases AN1596 and AN1597 probably function as decorative enzymes. It is possible that in biological conditions the compound is oxidized to ent-pimara-8(14),15-dien-19-oic acid, which is a bioactive diterpene compound predominant in many plant extracts. This Emericella nidulans (strain FGSC A4 / ATCC 38163 / CBS 112.46 / NRRL 194 / M139) (Aspergillus nidulans) protein is Pimaradiene synthase pbcA.